The following is a 324-amino-acid chain: Cyclic GMP-AMP synthase CdnE03 (324 aa).

Positions 87 and 89 each coordinate Mg(2+). ATP contacts are provided by residues aspartate 89, asparagine 144 to lysine 145, and aspartate 159. Aspartate 159 contacts Mg(2+). Positions 224 and 243 each coordinate GTP.

Belongs to the CD-NTase family. E03 subfamily. Mg(2+) serves as cofactor.

The catalysed reaction is GTP + ATP = 3',2'-cGAMP + 2 diphosphate. Its activity is regulated as follows. Activated by a virus-derived, approximately 400 nucleotide RNA (called CBASS-activating bacteriophage RNA, cabRNA) that begins in the viral terminase subunit terS and extends into terL. RNA secondary and/or tertiary structure, as well as viral infection itself, are important for CdnE activation. A much longer RNA (escaper RNA) with a different secondary structure, derived from a terS-mutated virus still binds to this protein, but does not activate its nucleotide cyclase activity. Shorter viral-derived RNAs (34 and 49 nt) with extensive predicted secondary structure also activate the enzyme, although not as well as full-length cabRNA. Cyclic nucleotide synthase (second messenger synthase) of a CBASS antivirus system. CBASS (cyclic oligonucleotide-based antiphage signaling system) provides immunity against bacteriophage. The CD-NTase protein synthesizes cyclic nucleotides in response to infection; these serve as specific second messenger signals. The signals activate a diverse range of effectors, leading to bacterial cell death and thus abortive phage infection. The effector for this system is downstream Cap15. A type I-B CBASS system. In terms of biological role, cyclic dinucleotide synthase that catalyzes the synthesis of 3',2'-cyclic GMP-AMP (cGAMP) from GTP and ATP upon activation by viral-derived cabRNA. Binds cabRNA via positive charges in its N-terminus. Its function is as follows. Protects S.aureus against phage infection. When the CBASS operon (cdnE-cap15) is introduced in S.aureus strain RN4220 there is strong protection against lytic DNA phages 80alpha-vir and phi-NM1-gamma-6 but little to no protection against phages phi-NM4-gamma-4 or phi-12-gamma-3. This is Cyclic GMP-AMP synthase CdnE03 from Staphylococcus schleiferi.